The sequence spans 108 residues: T-cell acute lymphocytic leukemia protein 2 homolog (108 aa).

The bHLH domain occupies 2–54 (TRKIFTNTRERWRQQSVNNAFAKLRKLIPTHPPDKKLSKNETLRLAMRYINFL). A disordered region spans residues 76–108 (GLFPPKTRLPDEDDRTLLNDYRVPSPGPSHGAP).

This is T-cell acute lymphocytic leukemia protein 2 homolog (Tal2) from Mus musculus (Mouse).